The following is a 270-amino-acid chain: SURF1-like protein (270 aa).

2 helical membrane-spanning segments follow: residues 7 to 29 (GFKL…VYRY) and 246 to 265 (YIGT…FRYM).

Belongs to the SURF1 family.

The protein localises to the mitochondrion inner membrane. In terms of biological role, probably involved in the biogenesis of the COX complex. The chain is SURF1-like protein (surf1-1) from Dictyostelium discoideum (Social amoeba).